A 324-amino-acid polypeptide reads, in one-letter code: tRNA-modifying protein YgfZ (324 aa).

Folate is bound at residue W184.

The protein belongs to the tRNA-modifying YgfZ family.

The protein resides in the cytoplasm. In terms of biological role, folate-binding protein involved in regulating the level of ATP-DnaA and in the modification of some tRNAs. It is probably a key factor in regulatory networks that act via tRNA modification, such as initiation of chromosomal replication. This Vibrio vulnificus (strain YJ016) protein is tRNA-modifying protein YgfZ.